A 405-amino-acid chain; its full sequence is Adenylosuccinate synthetase (405 aa).

GTP is bound by residues 12–18 and 40–42; these read GDEGKGK and GHT. The Proton acceptor role is filled by D13. Mg(2+)-binding residues include D13 and G40. Residues 13–16, 38–41, T121, R135, Q213, T228, and R297 each bind IMP; these read DEGK and NAGH. H41 serves as the catalytic Proton donor. 293–299 lines the substrate pocket; that stretch reads TTTGRPR. Residues R299, 325-327, and 390-392 each bind GTP; these read KMD and SAG.

The protein belongs to the adenylosuccinate synthetase family. Homodimer. The cofactor is Mg(2+).

The protein resides in the cytoplasm. The catalysed reaction is IMP + L-aspartate + GTP = N(6)-(1,2-dicarboxyethyl)-AMP + GDP + phosphate + 2 H(+). It participates in purine metabolism; AMP biosynthesis via de novo pathway; AMP from IMP: step 1/2. Plays an important role in the de novo pathway of purine nucleotide biosynthesis. Catalyzes the first committed step in the biosynthesis of AMP from IMP. This is Adenylosuccinate synthetase from Deinococcus radiodurans (strain ATCC 13939 / DSM 20539 / JCM 16871 / CCUG 27074 / LMG 4051 / NBRC 15346 / NCIMB 9279 / VKM B-1422 / R1).